The primary structure comprises 340 residues: MSAHPGKPGRYYLISYPRTASNLLLKILALDSQPNFSSGEVDGGYFFMPADDILIEPRIRARSIGDWTADERAQVKESFQACFEAQQQWLEATESQGRSVFVKEHTVFFADPTARSDLQFGPSPTREPAWTVEYAGGSTHSKLNITVLPDEFLLTWLPTFLIRHPALAFPSLYRTVIKREGKESAAADNFASLLTTVEWSRSLYDFYVQNRESLPCSPDQSLEWPMILDADDIIAHPATVALYCNKIGMDPRKLCFHWDQFKSEELSQIEPNQLAMRMSLYQSTGIDTSKSSRGINVDDEASKWRSEFGIAVGDHIEKLVRGAMADYEYLRARRLRADRG.

It functions in the pathway secondary metabolite biosynthesis. Functionally, sulfotransferase; part of the gene cluster that mediates the biosynthesis of pyrrolopyrazines, secondary metabolites showing insecticidal activity. The role of ppzF within the pathway has still to be determined. The single multifunctional NRPS ppzA is sufficient to produce peramine via condensation of 1-pyrroline-5-carboxylate and arginine, N-methylation of the alpha-amino group of arginine and reduction of the thioester and the cyclization to form an iminium ion resulting in release from the peptide synthetase. Deprotonation of this intermediate and oxidation of the pyrroline ring would give rise to peramine. In Epichloe species that produce only peramine, the peramine synthetase gene is not localized in a gene cluster, in contrast to Metarhizium species that contain additional pyrrolopyrazine biosynthesis genes. The 2-oxoglutarate-Fe(II) type oxidoreductase ppzC hydroxylates peramine to yield the newly identified compound 8-hydroxyperamine whereas ppzD converts L-proline into trans-4-hydroxy-L-proline, a precursor of peramine biosynthesis. This chain is Sulfotransferase ppzF, found in Metarhizium rileyi (strain RCEF 4871) (Nomuraea rileyi).